The primary structure comprises 396 residues: Elongation factor Tu 1 (396 aa).

The region spanning 10-206 (KPHVNVGTIG…ALDTYIPTPE (197 aa)) is the tr-type G domain. The interval 19–26 (GHVDHGKT) is G1. 19 to 26 (GHVDHGKT) contributes to the GTP binding site. Residue Thr26 coordinates Mg(2+). The tract at residues 60–64 (GITIN) is G2. The interval 81–84 (DCPG) is G3. GTP contacts are provided by residues 81 to 85 (DCPGH) and 136 to 139 (NKAD). Residues 136-139 (NKAD) form a G4 region. Positions 174-176 (SAK) are G5.

This sequence belongs to the TRAFAC class translation factor GTPase superfamily. Classic translation factor GTPase family. EF-Tu/EF-1A subfamily. In terms of assembly, monomer.

It localises to the cytoplasm. It carries out the reaction GTP + H2O = GDP + phosphate + H(+). In terms of biological role, GTP hydrolase that promotes the GTP-dependent binding of aminoacyl-tRNA to the A-site of ribosomes during protein biosynthesis. The chain is Elongation factor Tu 1 from Methylobacillus flagellatus (strain ATCC 51484 / DSM 6875 / VKM B-1610 / KT).